The primary structure comprises 207 residues: Alpha-1-acid glycoprotein 1 (207 aa).

An N-terminal signal peptide occupies residues 1 to 18 (MALHMILVMLSLLPLLEA). Pyrrolidone carboxylic acid is present on Gln19. 5 N-linked (GlcNAc...) asparagine glycosylation sites follow: Asn25, Asn34, Asn76, Asn94, and Asn104. Cys91 and Cys184 are disulfide-bonded.

The protein belongs to the calycin superfamily. Lipocalin family. In terms of tissue distribution, expressed by the liver and secreted in plasma.

It is found in the secreted. Its function is as follows. Functions as a transport protein in the blood stream. Binds various ligands in the interior of its beta-barrel domain. Appears to function in modulating the activity of the immune system during the acute-phase reaction. The chain is Alpha-1-acid glycoprotein 1 (Orm1) from Mus caroli (Ryukyu mouse).